The sequence spans 282 residues: 3-methyl-2-oxobutanoate hydroxymethyltransferase (282 aa).

Residues aspartate 44 and aspartate 83 each coordinate Mg(2+). 3-methyl-2-oxobutanoate is bound by residues 44–45 (DS), aspartate 83, and lysine 112. A Mg(2+)-binding site is contributed by glutamate 114. The active-site Proton acceptor is the glutamate 181.

It belongs to the PanB family. In terms of assembly, homodecamer; pentamer of dimers. Mg(2+) serves as cofactor.

It localises to the cytoplasm. It carries out the reaction 3-methyl-2-oxobutanoate + (6R)-5,10-methylene-5,6,7,8-tetrahydrofolate + H2O = 2-dehydropantoate + (6S)-5,6,7,8-tetrahydrofolate. It functions in the pathway cofactor biosynthesis; coenzyme A biosynthesis. Functionally, catalyzes the reversible reaction in which hydroxymethyl group from 5,10-methylenetetrahydrofolate is transferred onto alpha-ketoisovalerate to form ketopantoate. The chain is 3-methyl-2-oxobutanoate hydroxymethyltransferase from Pyrococcus abyssi (strain GE5 / Orsay).